We begin with the raw amino-acid sequence, 302 residues long: N-acetyl-D-glucosamine kinase (302 aa).

ATP-binding positions include 4–11 and 133–139; these read GFDIGGTK and GGGGLVL. Zn(2+) contacts are provided by H156, C176, C178, and C183.

Belongs to the ROK (NagC/XylR) family. NagK subfamily.

The enzyme catalyses N-acetyl-D-glucosamine + ATP = N-acetyl-D-glucosamine 6-phosphate + ADP + H(+). Its pathway is cell wall biogenesis; peptidoglycan recycling. Its function is as follows. Catalyzes the phosphorylation of N-acetyl-D-glucosamine (GlcNAc) derived from cell-wall degradation, yielding GlcNAc-6-P. The sequence is that of N-acetyl-D-glucosamine kinase from Salmonella typhi.